We begin with the raw amino-acid sequence, 381 residues long: Metacaspase-8 (381 aa).

Active-site residues include His86 and Cys140. Residue Cys140 is modified to S-nitrosocysteine.

Belongs to the peptidase C14B family. In terms of processing, proteolytically processed; by an autocatalytic mechanism.

Its function is as follows. Cysteine protease that cleaves specifically after arginine residues. Does not cleave caspase-specific substrates. May be involved in the modulation of programmed cell death activated by oxidative stress. The chain is Metacaspase-8 (AMC8) from Arabidopsis thaliana (Mouse-ear cress).